Reading from the N-terminus, the 601-residue chain is Aspartate--tRNA(Asp/Asn) ligase (601 aa).

Glutamate 173 contacts L-aspartate. The aspartate stretch occupies residues 197–200; sequence QLFK. Residue arginine 219 coordinates L-aspartate. ATP contacts are provided by residues 219–221 and glutamine 228; that span reads RDE. Histidine 456 contacts L-aspartate. An ATP-binding site is contributed by glutamate 490. Arginine 497 is a binding site for L-aspartate. 542-545 provides a ligand contact to ATP; sequence GWDR. Residues 566-601 form a disordered region; the sequence is GGGYDPLTQAPAPITAEQRRESGVDAVPDDETAPQA. Acidic residues predominate over residues 592–601; that stretch reads VPDDETAPQA.

It belongs to the class-II aminoacyl-tRNA synthetase family. Type 1 subfamily. Homodimer.

The protein resides in the cytoplasm. The catalysed reaction is tRNA(Asx) + L-aspartate + ATP = L-aspartyl-tRNA(Asx) + AMP + diphosphate. Aspartyl-tRNA synthetase with relaxed tRNA specificity since it is able to aspartylate not only its cognate tRNA(Asp) but also tRNA(Asn). Reaction proceeds in two steps: L-aspartate is first activated by ATP to form Asp-AMP and then transferred to the acceptor end of tRNA(Asp/Asn). The sequence is that of Aspartate--tRNA(Asp/Asn) ligase from Beutenbergia cavernae (strain ATCC BAA-8 / DSM 12333 / CCUG 43141 / JCM 11478 / NBRC 16432 / NCIMB 13614 / HKI 0122).